Here is an 86-residue protein sequence, read N- to C-terminus: Large ribosomal subunit protein bL27 (86 aa).

Residues 1-24 (MAHKKGTGSTRNGRDSNSKRLGVK) form a disordered region.

The protein belongs to the bacterial ribosomal protein bL27 family.

The protein is Large ribosomal subunit protein bL27 of Prochlorococcus marinus (strain MIT 9312).